Consider the following 251-residue polypeptide: 2,3-bisphosphoglycerate-dependent phosphoglycerate mutase (251 aa).

Substrate is bound by residues 13–20 (RHGESEWN), 26–27 (TG), arginine 65, 92–95 (ERHY), lysine 103, 119–120 (RR), and 186–187 (GN). Histidine 14 acts as the Tele-phosphohistidine intermediate in catalysis. The active-site Proton donor/acceptor is glutamate 92.

It belongs to the phosphoglycerate mutase family. BPG-dependent PGAM subfamily.

The catalysed reaction is (2R)-2-phosphoglycerate = (2R)-3-phosphoglycerate. The protein operates within carbohydrate degradation; glycolysis; pyruvate from D-glyceraldehyde 3-phosphate: step 3/5. Catalyzes the interconversion of 2-phosphoglycerate and 3-phosphoglycerate. This is 2,3-bisphosphoglycerate-dependent phosphoglycerate mutase from Rhodococcus opacus (strain B4).